Consider the following 929-residue polypeptide: Isoleucine--tRNA ligase (929 aa).

Residues Pro-58–His-68 carry the 'HIGH' region motif. Glu-568 provides a ligand contact to L-isoleucyl-5'-AMP. Positions Lys-609 to Ser-613 match the 'KMSKS' region motif. Residue Lys-612 participates in ATP binding. 4 residues coordinate Zn(2+): Cys-892, Cys-895, Cys-912, and Cys-915.

Belongs to the class-I aminoacyl-tRNA synthetase family. IleS type 1 subfamily. As to quaternary structure, monomer. It depends on Zn(2+) as a cofactor.

The protein localises to the cytoplasm. The enzyme catalyses tRNA(Ile) + L-isoleucine + ATP = L-isoleucyl-tRNA(Ile) + AMP + diphosphate. Catalyzes the attachment of isoleucine to tRNA(Ile). As IleRS can inadvertently accommodate and process structurally similar amino acids such as valine, to avoid such errors it has two additional distinct tRNA(Ile)-dependent editing activities. One activity is designated as 'pretransfer' editing and involves the hydrolysis of activated Val-AMP. The other activity is designated 'posttransfer' editing and involves deacylation of mischarged Val-tRNA(Ile). In Thiobacillus denitrificans (strain ATCC 25259 / T1), this protein is Isoleucine--tRNA ligase.